The chain runs to 319 residues: Red chlorophyll catabolite reductase, chloroplastic (319 aa).

A chloroplast-targeting transit peptide spans 1–39 (MAMIFCNTLYSSSSPSYLSPLTSKPSRFSKNLRPRAQFQ). Residues glutamate 154 and 207–209 (YVS) contribute to the red chlorophyll catabolite site. Positions 255–286 (LERCVKEEEEKIVVGEEERMELERRDKSFRRK) form a coiled coil. Aspartate 291 serves as a coordination point for red chlorophyll catabolite.

As to quaternary structure, homodimer. Interacts with HCAR. Interacts with SGR1, NYC1, NOL, PPH, PAO and the LHCII complex. Part of a SGR1-CCE-LHCII complex, which acts in chlorophyll breakdown. Expressed in all tissues tested, including roots.

The protein localises to the plastid. Its subcellular location is the chloroplast stroma. It is found in the chloroplast thylakoid membrane. It carries out the reaction primary fluorescent chlorophyll catabolite + 2 oxidized [2Fe-2S]-[ferredoxin] = red chlorophyll catabolite + 2 reduced [2Fe-2S]-[ferredoxin] + 3 H(+). It functions in the pathway porphyrin-containing compound metabolism; chlorophyll degradation. Functionally, catalyzes the key reaction of chlorophyll catabolism, porphyrin macrocycle cleavage of pheophorbide a (pheide a) to a primary fluorescent catabolite (pFCC). Works in a two-step reaction with pheophorbide a oxygenase (PaO) by reducing the C20/C1 double bond of the intermediate, RCC. Belongs to the chlorophyll catabolic enzymes (CCEs). In Arabidopsis thaliana (Mouse-ear cress), this protein is Red chlorophyll catabolite reductase, chloroplastic.